A 122-amino-acid polypeptide reads, in one-letter code: Acidic phospholipase A2 (122 aa).

7 cysteine pairs are disulfide-bonded: Cys26-Cys115, Cys28-Cys44, Cys43-Cys95, Cys49-Cys122, Cys50-Cys88, Cys57-Cys81, and Cys75-Cys86. 3 residues coordinate Ca(2+): Tyr27, Gly29, and Gly31. Residue His47 is part of the active site. Asp48 serves as a coordination point for Ca(2+). Asp89 is a catalytic residue.

The protein belongs to the phospholipase A2 family. Group II subfamily. D49 sub-subfamily. Monomer. It depends on Ca(2+) as a cofactor. Expressed by the venom gland.

Its subcellular location is the secreted. It catalyses the reaction a 1,2-diacyl-sn-glycero-3-phosphocholine + H2O = a 1-acyl-sn-glycero-3-phosphocholine + a fatty acid + H(+). Functionally, PLA2 catalyzes the calcium-dependent hydrolysis of the 2-acyl groups in 3-sn-phosphoglycerides. In Gloydius blomhoffii (Mamushi), this protein is Acidic phospholipase A2.